Consider the following 1381-residue polypeptide: Hepatocyte growth factor receptor (1381 aa).

Positions Met1–Gly24 are cleaved as a signal peptide. The Extracellular segment spans residues Glu25–Leu934. The Sema domain maps to Lys27–Leu515. The N-linked (GlcNAc...) asparagine glycan is linked to Asn45. 4 disulfide bridges follow: Cys95–Cys101, Cys98–Cys160, Cys133–Cys141, and Cys172–Cys175. Residue Asn106 is glycosylated (N-linked (GlcNAc...) asparagine). 2 N-linked (GlcNAc...) asparagine glycosylation sites follow: Asn202 and Asn358. Intrachain disulfides connect Cys298–Cys363 and Cys385–Cys397. N-linked (GlcNAc...) asparagine glycans are attached at residues Asn399, Asn405, and Asn449. 4 cysteine pairs are disulfide-bonded: Cys520/Cys538, Cys526/Cys561, Cys529/Cys545, and Cys541/Cys551. Residue Asn553 is glycosylated (N-linked (GlcNAc...) asparagine). IPT/TIG domains lie at Pro563 to Val655, Pro657 to Arg739, and Pro742 to Val836. A glycan (O-linked (Man) threonine) is linked at Thr582. 2 N-linked (GlcNAc...) asparagine glycosylation sites follow: Asn607 and Asn635. 2 O-linked (Man) threonine glycosylation sites follow: Thr676 and Thr761. 3 N-linked (GlcNAc...) asparagine glycosylation sites follow: Asn785, Asn879, and Asn930. Residues Ile935–Leu955 traverse the membrane as a helical segment. The Cytoplasmic segment spans residues Lys956–Thr1381. Ser966 bears the Phosphoserine mark. Thr977 is modified (phosphothreonine). 3 positions are modified to phosphoserine: Ser990, Ser997, and Ser1000. Tyr1003 is subject to Phosphotyrosine. A Protein kinase domain is found at Val1078 to Ile1345. Residues Ile1084–Val1092 and Lys1110 contribute to the ATP site. Asp1204 acts as the Proton acceptor in catalysis. The interval Leu1212–Thr1381 is interaction with RANBP9. At Tyr1230 the chain carries Phosphotyrosine. Phosphotyrosine; by autocatalysis is present on residues Tyr1234 and Tyr1235. Thr1289 carries the post-translational modification Phosphothreonine. Residues Trp1320–Val1359 are interaction with MUC20. Phosphotyrosine; by autocatalysis occurs at positions 1349 and 1356. Phosphotyrosine is present on Tyr1365.

Belongs to the protein kinase superfamily. Tyr protein kinase family. Heterodimer made of an alpha chain (50 kDa) and a beta chain (145 kDa) which are disulfide linked. Binds PLXNB1. Interacts when phosphorylated with downstream effectors including STAT3, PIK3R1, SRC, PCLG1, GRB2 and GAB1. Interacts with SPSB1, SPSB2 and SPSB4. Interacts with INPP5D/SHIP1. When phosphorylated at Tyr-1356, interacts with INPPL1/SHIP2. Interacts with RANBP9 and RANBP10, as well as SPSB1, SPSB2, SPSB3 and SPSB4. SPSB1 binding occurs in the presence and in the absence of HGF, however HGF treatment has a positive effect on this interaction. Interacts with MUC20; prevents interaction with GRB2 and suppresses hepatocyte growth factor-induced cell proliferation. Interacts with GRB10. Interacts with PTPN1 and PTPN2. Interacts with HSP90AA1 and HSP90AB1; the interaction suppresses MET kinase activity. Interacts with tensin TNS3. Interacts (when phosphorylated) with tensin TNS4 (via SH2 domain); the interaction increases MET protein stability by inhibiting MET endocytosis and subsequent lysosomal degradation. Post-translationally, autophosphorylated in response to ligand binding on Tyr-1234 and Tyr-1235 in the kinase domain leading to further phosphorylation of Tyr-1349 and Tyr-1356 in the C-terminal multifunctional docking site. Dephosphorylated by PTPRJ at Tyr-1349 and Tyr-1365. Dephosphorylated by PTPN1 and PTPN2. In terms of processing, ubiquitinated. Ubiquitination by CBL regulates the receptor stability and activity through proteasomal degradation. O-mannosylation of IPT/TIG domains by TMEM260 is required for protein maturation. O-mannosylated residues are composed of single mannose glycans that are not elongated or modified.

Its subcellular location is the membrane. It catalyses the reaction L-tyrosyl-[protein] + ATP = O-phospho-L-tyrosyl-[protein] + ADP + H(+). In its inactive state, the C-terminal tail interacts with the catalytic domain and inhibits the kinase activity. Upon ligand binding, the C-terminal tail is displaced and becomes phosphorylated, thus increasing the kinase activity. Its function is as follows. Receptor tyrosine kinase that transduces signals from the extracellular matrix into the cytoplasm by binding to hepatocyte growth factor/HGF ligand. Regulates many physiological processes including proliferation, scattering, morphogenesis and survival. Ligand binding at the cell surface induces autophosphorylation of MET on its intracellular domain that provides docking sites for downstream signaling molecules. Following activation by ligand, interacts with the PI3-kinase subunit PIK3R1, PLCG1, SRC, GRB2, STAT3 or the adapter GAB1. Recruitment of these downstream effectors by MET leads to the activation of several signaling cascades including the RAS-ERK, PI3 kinase-AKT, or PLCgamma-PKC. The RAS-ERK activation is associated with the morphogenetic effects while PI3K/AKT coordinates prosurvival effects. During embryonic development, MET signaling plays a role in gastrulation, development and migration of muscles and neuronal precursors, angiogenesis and kidney formation. In adults, participates in wound healing as well as organ regeneration and tissue remodeling. Also promotes differentiation and proliferation of hematopoietic cells. This chain is Hepatocyte growth factor receptor (MET), found in Equus caballus (Horse).